A 191-amino-acid polypeptide reads, in one-letter code: Accessory gene regulator protein B (191 aa).

A run of 5 helical transmembrane segments spans residues 45–65, 81–101, 108–128, 144–164, and 165–185; these read IVVY…TVHL, STFA…WILI, IFMI…SPAI, ITAI…KQPF, and NELV…IFFP.

Belongs to the AgrB family.

The protein localises to the cell membrane. Essential for the production of a quorum sensing system signal molecule, the autoinducing peptide (AIP). This quorum sensing system is responsible for the regulation of the expression of virulence factor genes. Involved in the proteolytic processing of AgrD, the precursor of AIP. The sequence is that of Accessory gene regulator protein B from Staphylococcus carnosus (strain TM300).